We begin with the raw amino-acid sequence, 332 residues long: Holliday junction branch migration complex subunit RuvB (332 aa).

The segment at 1-182 (MKLNKNSELK…FGLILKLNYY (182 aa)) is large ATPase domain (RuvB-L). Residues Leu-21, Arg-22, Gly-63, Lys-66, Thr-67, Thr-68, 129-131 (EDY), Arg-172, Tyr-182, and Arg-219 each bind ATP. A Mg(2+)-binding site is contributed by Thr-67. The tract at residues 183-253 (SEDELELIIK…ISEIALEKLT (71 aa)) is small ATPAse domain (RuvB-S). The interval 256-332 (KNGLDDADYT…FKLFKNDKIK (77 aa)) is head domain (RuvB-H). DNA contacts are provided by Arg-311 and Arg-316.

The protein belongs to the RuvB family. As to quaternary structure, homohexamer. Forms an RuvA(8)-RuvB(12)-Holliday junction (HJ) complex. HJ DNA is sandwiched between 2 RuvA tetramers; dsDNA enters through RuvA and exits via RuvB. An RuvB hexamer assembles on each DNA strand where it exits the tetramer. Each RuvB hexamer is contacted by two RuvA subunits (via domain III) on 2 adjacent RuvB subunits; this complex drives branch migration. In the full resolvosome a probable DNA-RuvA(4)-RuvB(12)-RuvC(2) complex forms which resolves the HJ.

The protein resides in the cytoplasm. The catalysed reaction is ATP + H2O = ADP + phosphate + H(+). The RuvA-RuvB-RuvC complex processes Holliday junction (HJ) DNA during genetic recombination and DNA repair, while the RuvA-RuvB complex plays an important role in the rescue of blocked DNA replication forks via replication fork reversal (RFR). RuvA specifically binds to HJ cruciform DNA, conferring on it an open structure. The RuvB hexamer acts as an ATP-dependent pump, pulling dsDNA into and through the RuvAB complex. RuvB forms 2 homohexamers on either side of HJ DNA bound by 1 or 2 RuvA tetramers; 4 subunits per hexamer contact DNA at a time. Coordinated motions by a converter formed by DNA-disengaged RuvB subunits stimulates ATP hydrolysis and nucleotide exchange. Immobilization of the converter enables RuvB to convert the ATP-contained energy into a lever motion, pulling 2 nucleotides of DNA out of the RuvA tetramer per ATP hydrolyzed, thus driving DNA branch migration. The RuvB motors rotate together with the DNA substrate, which together with the progressing nucleotide cycle form the mechanistic basis for DNA recombination by continuous HJ branch migration. Branch migration allows RuvC to scan DNA until it finds its consensus sequence, where it cleaves and resolves cruciform DNA. This is Holliday junction branch migration complex subunit RuvB from Phytoplasma mali (strain AT).